We begin with the raw amino-acid sequence, 242 residues long: MNNNINFIKCSSYEELSKKTANDFITVIKNKPNSVLGLATGSSPMGVYKELIKAYENKEISFRDCVSFNLDEYIGLKKEYEDQTYKYFMNDNLFSKIDINKDNTFFPIDAFSTNMNQDFESYDSKIDSYNGLDILILGIGNNGHIGFNEPGSLIDSKTRMIDLTESTIKANSRFFKSENDVPRKSVTMGLSTILKAKKIVLVVVGDSKKEALNALMNSKSFDSNWPCTALVNHDNVVVYYIG.

D71 functions as the Proton acceptor; for enolization step in the catalytic mechanism. N142 acts as the For ring-opening step in catalysis. The Proton acceptor; for ring-opening step role is filled by H144. E149 (for ring-opening step) is an active-site residue.

The protein belongs to the glucosamine/galactosamine-6-phosphate isomerase family. NagB subfamily.

The enzyme catalyses alpha-D-glucosamine 6-phosphate + H2O = beta-D-fructose 6-phosphate + NH4(+). Its pathway is amino-sugar metabolism; N-acetylneuraminate degradation; D-fructose 6-phosphate from N-acetylneuraminate: step 5/5. Catalyzes the reversible isomerization-deamination of glucosamine 6-phosphate (GlcN6P) to form fructose 6-phosphate (Fru6P) and ammonium ion. The polypeptide is Glucosamine-6-phosphate deaminase (Malacoplasma penetrans (strain HF-2) (Mycoplasma penetrans)).